Here is a 490-residue protein sequence, read N- to C-terminus: Protein LMBR1L (490 aa).

Over 1–21 the chain is Extracellular; sequence MEAPDYEVLSVREQLFHERIR. The segment at 1-59 is interaction with LGB; sequence MEAPDYEVLSVREQLFHERIRECIISTLLFATLYILCHIFLTRFKKPAEFTTVDDEDAT. The segment at 1-76 is LCN1-binding; that stretch reads MEAPDYEVLS…LCTFTLAIAL (76 aa). A helical membrane pass occupies residues 22–42; that stretch reads ECIISTLLFATLYILCHIFLT. Topologically, residues 43 to 66 are cytoplasmic; sequence RFKKPAEFTTVDDEDATVNKIALE. The helical transmembrane segment at 67–87 threads the bilayer; that stretch reads LCTFTLAIALGAVLLLPFSII. Over 88–114 the chain is Extracellular; it reads SNEVLLSLPRNYYIQWLNGSLIHGLWN. A helical transmembrane segment spans residues 115–135; it reads LVFLFSNLSLIFLMPFAYFFT. The Cytoplasmic segment spans residues 136 to 154; it reads ESEGFAGSRRGVLGRVYET. A helical membrane pass occupies residues 155 to 175; that stretch reads VVMLMLLTLLVLGMVWVASAI. Topologically, residues 176–196 are extracellular; sequence LDNNKASRESLYDFWEYYLPY. Residues 197–217 form a helical membrane-spanning segment; it reads LYSCISFLGVLLLLVCTPLGL. Topologically, residues 218 to 305 are cytoplasmic; that stretch reads ARMFSVTGKL…NLGYPLAMLC (88 aa). A helical membrane pass occupies residues 306 to 326; sequence LLVLTGLSVLIVAIHILELLI. Residues 327-350 are Extracellular-facing; sequence DEAAMPRGMQDASLGQVSFSRLGS. A helical membrane pass occupies residues 351–371; the sequence is FGAVIQVALIFYLMVSSVVGF. Residues 372-388 are Cytoplasmic-facing; the sequence is YSSPLFRSLRPRWHDTA. A helical membrane pass occupies residues 389–409; that stretch reads MTQIIGNCVCLLVLSSALPVF. The Extracellular segment spans residues 410 to 431; that stretch reads SRTLGLTRFDLLGDFGRFNWLG. A helical membrane pass occupies residues 432 to 452; sequence NFYIVFLYNAAFAGLTTLCLV. At 453–490 the chain is on the cytoplasmic side; sequence KTFTAAVRAELIRAFGLDRLPLPVSGFPPRASRKTQHQ.

It belongs to the LIMR family. Dimer. Can also form higher oligomers. Interacts with LCN1; this interaction mediates the endocytosis of LCN1. Interacts with UBAC2, FAF2, VCP, AMFR, ZNRF3, CTNNB1, LRP6, GSK3A, GSK3B, FZD6, DVL2 and RNF43. Interaction with LGB and SCGB1A1 is controversial.

Its subcellular location is the cell membrane. It localises to the endoplasmic reticulum membrane. Plays an essential role in lymphocyte development by negatively regulating the canonical Wnt signaling pathway. In association with UBAC2 and E3 ubiquitin-protein ligase AMFR, promotes the ubiquitin-mediated degradation of CTNNB1 and Wnt receptors FZD6 and LRP6. LMBR1L stabilizes the beta-catenin destruction complex that is required for regulating CTNNB1 levels. Acts as a LCN1 receptor and can mediate its endocytosis. This is Protein LMBR1L (LMBR1L) from Pongo abelii (Sumatran orangutan).